The chain runs to 271 residues: Phosphate import ATP-binding protein PstB (271 aa).

In terms of domain architecture, ABC transporter spans F25–I266. G57–S64 serves as a coordination point for ATP.

This sequence belongs to the ABC transporter superfamily. Phosphate importer (TC 3.A.1.7) family. In terms of assembly, the complex is composed of two ATP-binding proteins (PstB), two transmembrane proteins (PstC and PstA) and a solute-binding protein (PstS).

The protein localises to the cell membrane. The catalysed reaction is phosphate(out) + ATP + H2O = ADP + 2 phosphate(in) + H(+). Its function is as follows. Part of the ABC transporter complex PstSACB involved in phosphate import. Responsible for energy coupling to the transport system. The protein is Phosphate import ATP-binding protein PstB of Bacillus anthracis.